A 649-amino-acid chain; its full sequence is Echinoderm microtubule-associated protein-like 2 (649 aa).

Positions 10–649 are tandem atypical propeller in EMLs; it reads KEVIFSVEDG…DTSVLQWRVV (640 aa). Coiled-coil stretches lie at residues 13 to 58 and 73 to 114; these read IFSV…LKLE and YLLP…LAIH. WD repeat units follow at residues 56–93, 97–144, 151–192, 195–234, 241–280, 285–323, 369–406, 410–447, 452–489, 495–535, 564–602, and 609–648; these read KLEWVYGYRGRDCRANLYLLPTGEIVYFVASVAVLYSV, RQRH…IWDS, HVLG…VWDW, ETKVVDVKCSNEAVLVATFHPTDPTVLITCGKSHIYFWTL, KRQGLFEKHEKPKYVLCVTFLEGGDVVTGDSGGNLYVWGK, ITQAVLGAHDGGVFGLCALRDGTLVSGGGRDRRVVLWGS, FSLLVQGHVEELWGLATHPSRAQFVTCGQDKLVHLWSS, QPLWSRIIEDPARSAGFHPSGSVLAVGTVTGRWLLLDT, LVAIHTDGNEQISVVSFSPDGAYLAVGSHDNLVYVYTV, KVSR…YWDP, FGIWSEGADGTDINAVARSHDGKLLASADDFGKVHLFSY, and ALSHKYGGHSSHVTNVAFLWDDSMALTTGGKDTSVLQWRV.

It belongs to the WD repeat EMAP family. As to quaternary structure, homotrimer; self-association is mediated by the N-terminal coiled coil. In terms of assembly, interacts with GRID2 and may also interact with GRID1. Interacts with EML3. Binds unpolymerized tubulins via its WD repeat region. Ubiquitous.

It localises to the cytoplasm. The protein resides in the cytoskeleton. It is found in the spindle. Its function is as follows. Tubulin binding protein that inhibits microtubule nucleation and growth, resulting in shorter microtubules. This is Echinoderm microtubule-associated protein-like 2 (EML2) from Homo sapiens (Human).